A 257-amino-acid chain; its full sequence is uncharacterized protein (257 aa).

The helical transmembrane segment at 7–27 threads the bilayer; it reads LFLCVSFLLITIFIGGGGFMN.

Belongs to the staphylococcal tandem lipoprotein family.

It is found in the cell membrane. This is an uncharacterized protein from Staphylococcus epidermidis (strain ATCC 12228 / FDA PCI 1200).